The primary structure comprises 305 residues: GMP synthase [glutamine-hydrolyzing] subunit B (305 aa).

The 184-residue stretch at 2–185 (VEPTAFIDEK…LDLESIIAER (184 aa)) folds into the GMPS ATP-PPase domain. 29-35 (SGGVDSS) contributes to the ATP binding site.

In terms of assembly, heterodimer composed of a glutamine amidotransferase subunit (A) and a GMP-binding subunit (B).

It catalyses the reaction XMP + L-glutamine + ATP + H2O = GMP + L-glutamate + AMP + diphosphate + 2 H(+). The protein operates within purine metabolism; GMP biosynthesis; GMP from XMP (L-Gln route): step 1/1. Functionally, catalyzes the synthesis of GMP from XMP. This is GMP synthase [glutamine-hydrolyzing] subunit B from Natronomonas pharaonis (strain ATCC 35678 / DSM 2160 / CIP 103997 / JCM 8858 / NBRC 14720 / NCIMB 2260 / Gabara) (Halobacterium pharaonis).